Reading from the N-terminus, the 300-residue chain is Elongator complex protein 5 (300 aa).

At S252 the chain carries Phosphoserine. The interval 264–300 is disordered; the sequence is QQALLRPRPGQATSHIFYEPDAYDDLDQEDPDDDLDI. Residues 284 to 300 show a composition bias toward acidic residues; the sequence is DAYDDLDQEDPDDDLDI.

Belongs to the ELP5 family. Component of the elongator complex which consists of ELP1, ELP2, ELP3, ELP4, ELP5 and ELP6; in the complex, is required for optimal binding of ELP3 to ELP4. Post-translationally, tyrosine-phosphorylated. Ubiquitously expressed with high levels in heart, brain, liver, skeletal muscle and testis.

Its subcellular location is the nucleus. The protein localises to the cytoplasm. Its pathway is tRNA modification; 5-methoxycarbonylmethyl-2-thiouridine-tRNA biosynthesis. Functionally, component of the elongator complex which is required for multiple tRNA modifications, including mcm5U (5-methoxycarbonylmethyl uridine), mcm5s2U (5-methoxycarbonylmethyl-2-thiouridine), and ncm5U (5-carbamoylmethyl uridine). The elongator complex catalyzes formation of carboxymethyluridine in the wobble base at position 34 in tRNAs. Involved in cell migration. The chain is Elongator complex protein 5 from Homo sapiens (Human).